A 152-amino-acid chain; its full sequence is Superoxide dismutase [Cu-Zn] (152 aa).

Cu cation contacts are provided by H45, H47, and H62. C56 and C145 are oxidised to a cystine. 4 residues coordinate Zn(2+): H62, H70, H79, and D82. H119 serves as a coordination point for Cu cation.

Belongs to the Cu-Zn superoxide dismutase family. Homodimer. It depends on Cu cation as a cofactor. Zn(2+) serves as cofactor.

The protein resides in the cytoplasm. It catalyses the reaction 2 superoxide + 2 H(+) = H2O2 + O2. Functionally, destroys radicals which are normally produced within the cells and which are toxic to biological systems. The polypeptide is Superoxide dismutase [Cu-Zn] (SODCC) (Brassica oleracea var. capitata (Cabbage)).